The primary structure comprises 378 residues: UDP-N-acetylglucosamine--N-acetylmuramyl-(pentapeptide) pyrophosphoryl-undecaprenol N-acetylglucosamine transferase (378 aa).

UDP-N-acetyl-alpha-D-glucosamine-binding positions include 13-15 (TGG), N124, R165, S193, and Q294.

The protein belongs to the glycosyltransferase 28 family. MurG subfamily.

The protein localises to the cell inner membrane. It catalyses the reaction di-trans,octa-cis-undecaprenyl diphospho-N-acetyl-alpha-D-muramoyl-L-alanyl-D-glutamyl-meso-2,6-diaminopimeloyl-D-alanyl-D-alanine + UDP-N-acetyl-alpha-D-glucosamine = di-trans,octa-cis-undecaprenyl diphospho-[N-acetyl-alpha-D-glucosaminyl-(1-&gt;4)]-N-acetyl-alpha-D-muramoyl-L-alanyl-D-glutamyl-meso-2,6-diaminopimeloyl-D-alanyl-D-alanine + UDP + H(+). Its pathway is cell wall biogenesis; peptidoglycan biosynthesis. Functionally, cell wall formation. Catalyzes the transfer of a GlcNAc subunit on undecaprenyl-pyrophosphoryl-MurNAc-pentapeptide (lipid intermediate I) to form undecaprenyl-pyrophosphoryl-MurNAc-(pentapeptide)GlcNAc (lipid intermediate II). In Agrobacterium fabrum (strain C58 / ATCC 33970) (Agrobacterium tumefaciens (strain C58)), this protein is UDP-N-acetylglucosamine--N-acetylmuramyl-(pentapeptide) pyrophosphoryl-undecaprenol N-acetylglucosamine transferase.